The following is a 342-amino-acid chain: Mitogen-activated protein kinase kinase kinase 20 (342 aa).

Positions 3–268 (WVRGETIGFG…AEMLLNHSFV (266 aa)) constitute a Protein kinase domain. 9–17 (IGFGTFSTV) serves as a coordination point for ATP. Position 18 is a phosphoserine (Ser-18). Thr-19 carries the post-translational modification Phosphothreonine. An ATP-binding site is contributed by Lys-36. Residues Tyr-41 and Tyr-66 each carry the phosphotyrosine modification. Phosphoserine is present on residues Ser-93 and Ser-114. The Proton acceptor role is filled by Asp-131. The tract at residues 285–342 (KDEDKVLMSPKCPFEFDDWDSFTLDSNPSFDSPVERLGSLVSGSIPDWSVGGSWLTVR) is required for MKK3 binding.

This sequence belongs to the protein kinase superfamily. Ser/Thr protein kinase family. In terms of assembly, interacts with MKK3 and MPK18 via its C-terminal domain. Binds to MKK5. In terms of processing, autophosphorylates; active in phosphorylated state. Dephosphorylated by ABI1. As to expression, expressed in roots, seedlings, leaves, flower buds, flowers and siliques.

It is found in the nucleus. It localises to the cytoplasm. It catalyses the reaction L-seryl-[protein] + ATP = O-phospho-L-seryl-[protein] + ADP + H(+). The catalysed reaction is L-threonyl-[protein] + ATP = O-phospho-L-threonyl-[protein] + ADP + H(+). Its activity is regulated as follows. Activated through serine, threonine and tyrosine phosphorylation, especially upon abscisic acid (ABA) treatment. Restricted activity by ABI1-mediated dephosphorylation. Functionally, mitogen-activated protein kinase kinase (MAPKK) that phosphorylates both MKK3 and MPK18 and regulate two separate signaling pathways involved in root microtubule functions. MAPKK which regulates abscisic acid (ABA) responses in a MAPKKK20-MKK5-MPK6 cascade involved in root growth (e.g. root cell division and elongation) and stomatal response, probably via MKK5 activation by protein phosphorylation and subsequent activation of MAPK6 by MKK5. Involved in various abiotic stresses (e.g. osmotic stress, cold and hydrogen peroxide) responses by phosphorylating and thus regulating MPK6 activity, in an ABA-independent manner. In Arabidopsis thaliana (Mouse-ear cress), this protein is Mitogen-activated protein kinase kinase kinase 20.